Here is a 701-residue protein sequence, read N- to C-terminus: Ribosomal RNA large subunit methyltransferase K/L (701 aa).

Residues 43 to 155 enclose the THUMP domain; it reads LLYKSLMWSR…NNILHIMLDL (113 aa).

The protein belongs to the methyltransferase superfamily. RlmKL family.

The protein localises to the cytoplasm. The enzyme catalyses guanosine(2445) in 23S rRNA + S-adenosyl-L-methionine = N(2)-methylguanosine(2445) in 23S rRNA + S-adenosyl-L-homocysteine + H(+). It carries out the reaction guanosine(2069) in 23S rRNA + S-adenosyl-L-methionine = N(2)-methylguanosine(2069) in 23S rRNA + S-adenosyl-L-homocysteine + H(+). Its function is as follows. Specifically methylates the guanine in position 2445 (m2G2445) and the guanine in position 2069 (m7G2069) of 23S rRNA. The protein is Ribosomal RNA large subunit methyltransferase K/L of Buchnera aphidicola subsp. Acyrthosiphon pisum (strain APS) (Acyrthosiphon pisum symbiotic bacterium).